A 168-amino-acid polypeptide reads, in one-letter code: Translationally-controlled tumor protein homolog (168 aa).

Residues 1-168 (MLLYKDVISG…FKDGLVSEKF (168 aa)) enclose the TCTP domain. Phosphoserine is present on Ser78.

It belongs to the TCTP family.

The protein localises to the cytoplasm. In terms of biological role, involved in calcium binding and microtubule stabilization. May be a guanine nucleotide-free chaperone (GFC). The protein is Translationally-controlled tumor protein homolog (p23fy) of Schizosaccharomyces pombe (strain 972 / ATCC 24843) (Fission yeast).